A 914-amino-acid polypeptide reads, in one-letter code: Beta-mannosidase A (914 aa).

The first 20 residues, 1–20, serve as a signal peptide directing secretion; it reads MRFTATAAALVASSIPATLG. 7 N-linked (GlcNAc...) asparagine glycosylation sites follow: N39, N79, N230, N265, N299, N309, and N330. The active-site Proton donor is E462. N591, N614, N641, N721, N744, N773, N784, and N909 each carry an N-linked (GlcNAc...) asparagine glycan.

Belongs to the glycosyl hydrolase 2 family. Beta-mannosidase A subfamily. In terms of assembly, homodimer.

The protein resides in the secreted. It carries out the reaction Hydrolysis of terminal, non-reducing beta-D-mannose residues in beta-D-mannosides.. Its pathway is glycan metabolism; N-glycan degradation. Exoglycosidase that cleaves the single beta-linked mannose residue from the non-reducing end of beta-mannosidic oligosaccharides of various complexity and length. Involved in the degradation of polymeric mannan and galactomannan. The protein is Beta-mannosidase A (mndA) of Aspergillus oryzae (strain ATCC 42149 / RIB 40) (Yellow koji mold).